Reading from the N-terminus, the 148-residue chain is Endoribonuclease YbeY (148 aa).

Positions 113, 117, and 123 each coordinate Zn(2+).

It belongs to the endoribonuclease YbeY family. The cofactor is Zn(2+).

Its subcellular location is the cytoplasm. Single strand-specific metallo-endoribonuclease involved in late-stage 70S ribosome quality control and in maturation of the 3' terminus of the 16S rRNA. The sequence is that of Endoribonuclease YbeY from Borrelia recurrentis (strain A1).